Consider the following 143-residue polypeptide: MSIIQEFKEFAIKGNMMDLAIGVIIGGAFGKIVDSLVKDIIMPLITVITGGGVDFSQKFIVLGANPNNLQSLDALQKAGINVLTYGNFLTILINFLILAWVVFLMVKLLNKLRRDKNEPEAPAATPEDIQLLREIRDELKKQA.

3 consecutive transmembrane segments (helical) span residues 10-30, 40-60, and 86-106; these read FAIK…GAFG, IIMP…QKFI, and GNFL…FLMV.

Belongs to the MscL family. In terms of assembly, homopentamer.

The protein resides in the cell inner membrane. Its function is as follows. Channel that opens in response to stretch forces in the membrane lipid bilayer. May participate in the regulation of osmotic pressure changes within the cell. The sequence is that of Large-conductance mechanosensitive channel from Acinetobacter baumannii (strain ATCC 17978 / DSM 105126 / CIP 53.77 / LMG 1025 / NCDC KC755 / 5377).